Consider the following 103-residue polypeptide: Small ribosomal subunit protein uS10 (103 aa).

The protein belongs to the universal ribosomal protein uS10 family. Part of the 30S ribosomal subunit.

Functionally, involved in the binding of tRNA to the ribosomes. This Ruthia magnifica subsp. Calyptogena magnifica protein is Small ribosomal subunit protein uS10.